A 602-amino-acid chain; its full sequence is Sulfite reductase [NADPH] hemoprotein beta-component (602 aa).

Residues 1–15 show a composition bias toward basic and acidic residues; it reads MDDHKTASPPRERSY. Residues 1-24 are disordered; the sequence is MDDHKTASPPRERSYETPPAERPI. The [4Fe-4S] cluster site is built by Cys-458, Cys-464, Cys-503, and Cys-507. Cys-507 contributes to the siroheme binding site.

This sequence belongs to the nitrite and sulfite reductase 4Fe-4S domain family. Alpha(8)-beta(8). The alpha component is a flavoprotein, the beta component is a hemoprotein. Siroheme serves as cofactor. [4Fe-4S] cluster is required as a cofactor.

It catalyses the reaction hydrogen sulfide + 3 NADP(+) + 3 H2O = sulfite + 3 NADPH + 4 H(+). It functions in the pathway sulfur metabolism; hydrogen sulfide biosynthesis; hydrogen sulfide from sulfite (NADPH route): step 1/1. In terms of biological role, component of the sulfite reductase complex that catalyzes the 6-electron reduction of sulfite to sulfide. This is one of several activities required for the biosynthesis of L-cysteine from sulfate. This chain is Sulfite reductase [NADPH] hemoprotein beta-component, found in Methylobacterium nodulans (strain LMG 21967 / CNCM I-2342 / ORS 2060).